A 283-amino-acid polypeptide reads, in one-letter code: 4-hydroxy-3-methylbut-2-enyl diphosphate reductase (283 aa).

[4Fe-4S] cluster is bound at residue Cys12. (2E)-4-hydroxy-3-methylbut-2-enyl diphosphate contacts are provided by His40 and His73. Dimethylallyl diphosphate is bound by residues His40 and His73. Residues His40 and His73 each coordinate isopentenyl diphosphate. Cys95 provides a ligand contact to [4Fe-4S] cluster. His123 provides a ligand contact to (2E)-4-hydroxy-3-methylbut-2-enyl diphosphate. His123 is a binding site for dimethylallyl diphosphate. Isopentenyl diphosphate is bound at residue His123. Glu125 (proton donor) is an active-site residue. Thr161 provides a ligand contact to (2E)-4-hydroxy-3-methylbut-2-enyl diphosphate. Cys189 is a binding site for [4Fe-4S] cluster. Residues Ser217, Asn219, and Ser261 each contribute to the (2E)-4-hydroxy-3-methylbut-2-enyl diphosphate site. The dimethylallyl diphosphate site is built by Ser217, Asn219, and Ser261. Isopentenyl diphosphate contacts are provided by Ser217, Asn219, and Ser261.

Belongs to the IspH family. [4Fe-4S] cluster serves as cofactor.

It carries out the reaction isopentenyl diphosphate + 2 oxidized [2Fe-2S]-[ferredoxin] + H2O = (2E)-4-hydroxy-3-methylbut-2-enyl diphosphate + 2 reduced [2Fe-2S]-[ferredoxin] + 2 H(+). It catalyses the reaction dimethylallyl diphosphate + 2 oxidized [2Fe-2S]-[ferredoxin] + H2O = (2E)-4-hydroxy-3-methylbut-2-enyl diphosphate + 2 reduced [2Fe-2S]-[ferredoxin] + 2 H(+). It participates in isoprenoid biosynthesis; dimethylallyl diphosphate biosynthesis; dimethylallyl diphosphate from (2E)-4-hydroxy-3-methylbutenyl diphosphate: step 1/1. It functions in the pathway isoprenoid biosynthesis; isopentenyl diphosphate biosynthesis via DXP pathway; isopentenyl diphosphate from 1-deoxy-D-xylulose 5-phosphate: step 6/6. Functionally, catalyzes the conversion of 1-hydroxy-2-methyl-2-(E)-butenyl 4-diphosphate (HMBPP) into a mixture of isopentenyl diphosphate (IPP) and dimethylallyl diphosphate (DMAPP). Acts in the terminal step of the DOXP/MEP pathway for isoprenoid precursor biosynthesis. The polypeptide is 4-hydroxy-3-methylbut-2-enyl diphosphate reductase (Geobacter sp. (strain M21)).